The following is a 399-amino-acid chain: Subtilisin-like protease 4 (399 aa).

Residues 1–19 (MVCLKTLSVFLAAFAAADA) form the signal peptide. A propeptide spanning residues 20 to 118 (RAVFKTQGHK…VEQDQVVRIS (99 aa)) is cleaved from the precursor. The 80-residue stretch at 38 to 117 (YIVVMKDGVS…YVEQDQVVRI (80 aa)) folds into the Inhibitor I9 domain. An N-linked (GlcNAc...) asparagine glycan is attached at Asn102. Positions 128-399 (SWGLGRVSHR…NRLLYNGSGQ (272 aa)) constitute a Peptidase S8 domain. Residues Asp160 and His191 each act as charge relay system in the active site. N-linked (GlcNAc...) asparagine glycosylation is found at Asn252 and Asn308. Ser346 serves as the catalytic Charge relay system. Residue Asn395 is glycosylated (N-linked (GlcNAc...) asparagine).

Belongs to the peptidase S8 family.

Its subcellular location is the secreted. Functionally, secreted subtilisin-like serine protease with keratinolytic activity that contributes to pathogenicity. The protein is Subtilisin-like protease 4 (SUB4) of Trichophyton rubrum (Athlete's foot fungus).